The following is a 674-amino-acid chain: 1,4-alpha-glucan branching enzyme GlgB 1 (674 aa).

The active-site Nucleophile is Asp-336. Glu-389 acts as the Proton donor in catalysis.

The protein belongs to the glycosyl hydrolase 13 family. GlgB subfamily. Monomer.

It catalyses the reaction Transfers a segment of a (1-&gt;4)-alpha-D-glucan chain to a primary hydroxy group in a similar glucan chain.. Its pathway is glycan biosynthesis; glycogen biosynthesis. In terms of biological role, catalyzes the formation of the alpha-1,6-glucosidic linkages in glycogen by scission of a 1,4-alpha-linked oligosaccharide from growing alpha-1,4-glucan chains and the subsequent attachment of the oligosaccharide to the alpha-1,6 position. The protein is 1,4-alpha-glucan branching enzyme GlgB 1 (glgB1) of Clostridium perfringens (strain 13 / Type A).